Consider the following 372-residue polypeptide: 4-hydroxy-3-methylbut-2-en-1-yl diphosphate synthase (flavodoxin) (372 aa).

[4Fe-4S] cluster contacts are provided by cysteine 270, cysteine 273, cysteine 305, and glutamate 312.

It belongs to the IspG family. [4Fe-4S] cluster serves as cofactor.

The catalysed reaction is (2E)-4-hydroxy-3-methylbut-2-enyl diphosphate + oxidized [flavodoxin] + H2O + 2 H(+) = 2-C-methyl-D-erythritol 2,4-cyclic diphosphate + reduced [flavodoxin]. It participates in isoprenoid biosynthesis; isopentenyl diphosphate biosynthesis via DXP pathway; isopentenyl diphosphate from 1-deoxy-D-xylulose 5-phosphate: step 5/6. Converts 2C-methyl-D-erythritol 2,4-cyclodiphosphate (ME-2,4cPP) into 1-hydroxy-2-methyl-2-(E)-butenyl 4-diphosphate. This chain is 4-hydroxy-3-methylbut-2-en-1-yl diphosphate synthase (flavodoxin), found in Idiomarina loihiensis (strain ATCC BAA-735 / DSM 15497 / L2-TR).